Reading from the N-terminus, the 299-residue chain is 33 kDa chaperonin (299 aa).

Disulfide bonds link C238–C240 and C271–C274.

The protein belongs to the HSP33 family. Post-translationally, under oxidizing conditions two disulfide bonds are formed involving the reactive cysteines. Under reducing conditions zinc is bound to the reactive cysteines and the protein is inactive.

The protein resides in the cytoplasm. In terms of biological role, redox regulated molecular chaperone. Protects both thermally unfolding and oxidatively damaged proteins from irreversible aggregation. Plays an important role in the bacterial defense system toward oxidative stress. In Alkaliphilus oremlandii (strain OhILAs) (Clostridium oremlandii (strain OhILAs)), this protein is 33 kDa chaperonin.